We begin with the raw amino-acid sequence, 476 residues long: ATP synthase subunit beta (476 aa).

G158–T165 lines the ATP pocket.

Belongs to the ATPase alpha/beta chains family. F-type ATPases have 2 components, CF(1) - the catalytic core - and CF(0) - the membrane proton channel. CF(1) has five subunits: alpha(3), beta(3), gamma(1), delta(1), epsilon(1). CF(0) has three main subunits: a(1), b(2) and c(9-12). The alpha and beta chains form an alternating ring which encloses part of the gamma chain. CF(1) is attached to CF(0) by a central stalk formed by the gamma and epsilon chains, while a peripheral stalk is formed by the delta and b chains.

It localises to the cell inner membrane. It carries out the reaction ATP + H2O + 4 H(+)(in) = ADP + phosphate + 5 H(+)(out). Produces ATP from ADP in the presence of a proton gradient across the membrane. The catalytic sites are hosted primarily by the beta subunits. The polypeptide is ATP synthase subunit beta (Paracidovorax citrulli (strain AAC00-1) (Acidovorax citrulli)).